The chain runs to 239 residues: Pre-mRNA-splicing factor isy1 (239 aa).

The protein belongs to the ISY1 family. Associated with the spliceosome.

The protein localises to the cytoplasm. The protein resides in the nucleus. In terms of biological role, involved in pre-mRNA splicing. This Neurospora crassa (strain ATCC 24698 / 74-OR23-1A / CBS 708.71 / DSM 1257 / FGSC 987) protein is Pre-mRNA-splicing factor isy1 (msp-7).